The sequence spans 180 residues: NAD(P)H-quinone oxidoreductase subunit I, chloroplastic (180 aa).

4Fe-4S ferredoxin-type domains lie at 55 to 84 (GRIH…VDWR) and 95 to 124 (LNYS…MTEE). C64, C67, C70, C74, C104, C107, C110, and C114 together coordinate [4Fe-4S] cluster.

It belongs to the complex I 23 kDa subunit family. As to quaternary structure, NDH is composed of at least 16 different subunits, 5 of which are encoded in the nucleus. It depends on [4Fe-4S] cluster as a cofactor.

The protein resides in the plastid. It is found in the chloroplast thylakoid membrane. The enzyme catalyses a plastoquinone + NADH + (n+1) H(+)(in) = a plastoquinol + NAD(+) + n H(+)(out). It carries out the reaction a plastoquinone + NADPH + (n+1) H(+)(in) = a plastoquinol + NADP(+) + n H(+)(out). Functionally, NDH shuttles electrons from NAD(P)H:plastoquinone, via FMN and iron-sulfur (Fe-S) centers, to quinones in the photosynthetic chain and possibly in a chloroplast respiratory chain. The immediate electron acceptor for the enzyme in this species is believed to be plastoquinone. Couples the redox reaction to proton translocation, and thus conserves the redox energy in a proton gradient. The polypeptide is NAD(P)H-quinone oxidoreductase subunit I, chloroplastic (Zea mays (Maize)).